The chain runs to 478 residues: ATP synthase subunit beta (478 aa).

161 to 168 (GGAGVGKT) lines the ATP pocket.

The protein belongs to the ATPase alpha/beta chains family. F-type ATPases have 2 components, CF(1) - the catalytic core - and CF(0) - the membrane proton channel. CF(1) has five subunits: alpha(3), beta(3), gamma(1), delta(1), epsilon(1). CF(0) has four main subunits: a(1), b(1), b'(1) and c(9-12).

The protein localises to the cell inner membrane. The catalysed reaction is ATP + H2O + 4 H(+)(in) = ADP + phosphate + 5 H(+)(out). In terms of biological role, produces ATP from ADP in the presence of a proton gradient across the membrane. The catalytic sites are hosted primarily by the beta subunits. This chain is ATP synthase subunit beta, found in Gloeobacter violaceus (strain ATCC 29082 / PCC 7421).